The chain runs to 237 residues: DCN1-like protein 5 (237 aa).

Ser-41 is subject to Phosphoserine; by IKKA. The region spanning Phe-46–Lys-232 is the DCUN1 domain.

Part of a complex that contains DCUN1D5, CUL1 and RBX1; this interaction is bridged by CUL1. Interacts (via the DCUN1 domain) with the unneddylated cullins: interacts with CUL1, CUL2, CUL3, CUL4A, CUL4B and CUL5; these interactions promote the cullin neddylation and the identity of the cullin dictates the affinity of the interaction. Interacts (via DCUN1 domain) with UBE2M (N-terminally acetylated form) and probably with UBE2F (N-terminally acetylated form). May also interact with regulators or subunits of cullin-RING ligases such as RBX1, RNF7, ELOB and DDB1; these interactions are bridged by cullins. Interacts with CAND1; this interaction is bridged by cullins and strongly inhibits the neddylation of cullins. These CAND-cullin-DCNL complexes can only be neddylated in the presence of a substrate adapter. Phosphorylation at Ser-41 is independent of cullin's interaction. Phosphorylated in response to both TICAM1 and MYD88 dependent Toll-like receptor (TLR) pathway activation. Phosphorylated in response to IL1B stimulation. In terms of tissue distribution, highly expressed in testis. Lower levels of expression in skin, thymus, spleen, lymph nodes, lung, brain, heart, skeletal muscles, kidney, liver an ovary.

The protein localises to the nucleus. Its subcellular location is the cytoplasm. The protein resides in the cytoskeleton. It localises to the spindle. Contributes to the neddylation of all cullins by transferring NEDD8 from N-terminally acetylated NEDD8-conjugating E2s enzyme to different cullin C-terminal domain-RBX complexes which is necessary for the activation of cullin-RING E3 ubiquitin ligases (CRLs). May play a role in DNA damage response and may participate in cell proliferation and anchorage-independent cell growth. The protein is DCN1-like protein 5 of Mus musculus (Mouse).